The primary structure comprises 104 residues: Large ribosomal subunit protein bL21 (104 aa).

Belongs to the bacterial ribosomal protein bL21 family. Part of the 50S ribosomal subunit. Contacts protein L20.

Functionally, this protein binds to 23S rRNA in the presence of protein L20. The sequence is that of Large ribosomal subunit protein bL21 from Lactococcus lactis subsp. cremoris (strain MG1363).